A 70-amino-acid polypeptide reads, in one-letter code: Gas vesicle protein A (70 aa).

It belongs to the gas vesicle GvpA family. In terms of assembly, the gas vesicle shell is 2 nm thick and consists of a single layer of this protein. It forms helical ribs nearly perpendicular to the long axis of the vesicle.

It localises to the gas vesicle shell. Gas vesicles are hollow, gas filled proteinaceous nanostructures found in some microorganisms. During planktonic growth they allow positioning of the organism at a favorable depth for light or nutrient acquisition. GvpA forms the protein shell. This chain is Gas vesicle protein A, found in Ancylobacter aquaticus.